The following is a 137-amino-acid chain: Peptide methionine sulfoxide reductase MsrB (137 aa).

In terms of domain architecture, MsrB spans 7–129; it reads PTENIEKLTD…NSASLNFVDD (123 aa). Cys46, Cys49, Cys95, and Cys98 together coordinate Zn(2+). Cys118 serves as the catalytic Nucleophile.

The protein belongs to the MsrB Met sulfoxide reductase family. It depends on Zn(2+) as a cofactor.

The enzyme catalyses L-methionyl-[protein] + [thioredoxin]-disulfide + H2O = L-methionyl-(R)-S-oxide-[protein] + [thioredoxin]-dithiol. This is Peptide methionine sulfoxide reductase MsrB from Yersinia enterocolitica serotype O:8 / biotype 1B (strain NCTC 13174 / 8081).